Here is a 608-residue protein sequence, read N- to C-terminus: Aspartate--tRNA(Asp/Asn) ligase (608 aa).

Glu-179 provides a ligand contact to L-aspartate. Residues 203-206 (QLFK) are aspartate. Arg-225 is a binding site for L-aspartate. Residues 225–227 (RDE) and Gln-234 contribute to the ATP site. His-461 is a binding site for L-aspartate. Glu-494 lines the ATP pocket. Arg-501 serves as a coordination point for L-aspartate. ATP is bound at residue 546–549 (GLDR).

Belongs to the class-II aminoacyl-tRNA synthetase family. Type 1 subfamily. Homodimer.

It localises to the cytoplasm. The catalysed reaction is tRNA(Asx) + L-aspartate + ATP = L-aspartyl-tRNA(Asx) + AMP + diphosphate. In terms of biological role, aspartyl-tRNA synthetase with relaxed tRNA specificity since it is able to aspartylate not only its cognate tRNA(Asp) but also tRNA(Asn). Reaction proceeds in two steps: L-aspartate is first activated by ATP to form Asp-AMP and then transferred to the acceptor end of tRNA(Asp/Asn). In Psychrobacter arcticus (strain DSM 17307 / VKM B-2377 / 273-4), this protein is Aspartate--tRNA(Asp/Asn) ligase.